Consider the following 701-residue polypeptide: Elongation factor G (701 aa).

The tr-type G domain occupies 8-291 (GRYRNIGIVA…AVIDYLPAPT (284 aa)). Residues 17 to 24 (AHVDAGKT), 89 to 93 (DTPGH), and 143 to 146 (NKMD) contribute to the GTP site.

It belongs to the TRAFAC class translation factor GTPase superfamily. Classic translation factor GTPase family. EF-G/EF-2 subfamily.

Its subcellular location is the cytoplasm. Functionally, catalyzes the GTP-dependent ribosomal translocation step during translation elongation. During this step, the ribosome changes from the pre-translocational (PRE) to the post-translocational (POST) state as the newly formed A-site-bound peptidyl-tRNA and P-site-bound deacylated tRNA move to the P and E sites, respectively. Catalyzes the coordinated movement of the two tRNA molecules, the mRNA and conformational changes in the ribosome. In Pseudomonas syringae pv. syringae (strain B728a), this protein is Elongation factor G.